The following is a 658-amino-acid chain: Carnitine O-palmitoyltransferase 2, mitochondrial (658 aa).

A mitochondrion-targeting transit peptide spans 1 to 25; it reads MMPRLLFRAWPRCPSLVLGAPSRPL. Residues 26–178 lie on the Mitochondrial matrix side of the membrane; sequence SAVSGPDDYL…GLLEPEVFHL (153 aa). Lys69 and Lys85 each carry N6-succinyllysine. Residues 179-208 constitute an intramembrane region (note=Mitochondrial inner membrane); it reads NPSKSDTDAFKRLIRFVPPSLSWYGAYLVN. The Mitochondrial matrix portion of the chain corresponds to 209 to 658; that stretch reads AYPLDMSQYF…DALEGKAIKT (450 aa). N6-acetyllysine; alternate is present on Lys239. Position 239 is an N6-succinyllysine; alternate (Lys239). Lys305 is subject to N6-acetyllysine. His372 (proton acceptor) is an active-site residue. An N6-succinyllysine mark is found at Lys424 and Lys439. Position 452-464 (452-464) interacts with CoA; sequence GKEFLKKKQLSPD. Positions 486, 488, and 499 each coordinate (R)-carnitine. Lys510 and Lys544 each carry N6-acetyllysine; alternate. An N6-succinyllysine; alternate mark is found at Lys510 and Lys544.

The protein belongs to the carnitine/choline acetyltransferase family.

It is found in the mitochondrion inner membrane. The enzyme catalyses (R)-carnitine + hexadecanoyl-CoA = O-hexadecanoyl-(R)-carnitine + CoA. The catalysed reaction is octanoyl-CoA + (R)-carnitine = O-octanoyl-(R)-carnitine + CoA. It carries out the reaction decanoyl-CoA + (R)-carnitine = O-decanoyl-(R)-carnitine + CoA. It catalyses the reaction dodecanoyl-CoA + (R)-carnitine = O-dodecanoyl-R-carnitine + CoA. The enzyme catalyses tetradecanoyl-CoA + (R)-carnitine = O-tetradecanoyl-(R)-carnitine + CoA. The catalysed reaction is (R)-carnitine + octadecanoyl-CoA = O-octadecanoyl-(R)-carnitine + CoA. It carries out the reaction eicosanoyl-CoA + (R)-carnitine = O-eicosanoyl-(R)-carnitine + CoA. It catalyses the reaction (9Z)-tetradecenoyl-CoA + (R)-carnitine = O-(9Z)-tetradecenoyl-(R)-carnitine + CoA. The enzyme catalyses (5Z)-tetradecenoyl-CoA + (R)-carnitine = O-(5Z)-tetradecenoyl-(R)-carnitine + CoA. The catalysed reaction is (R)-carnitine + (9Z)-octadecenoyl-CoA = O-(9Z)-octadecenoyl-(R)-carnitine + CoA. It carries out the reaction 4,8-dimethylnonanoyl-CoA + (R)-carnitine = O-4,8-dimethylnonanoyl-(R)-carnitine + CoA. The protein operates within lipid metabolism; fatty acid beta-oxidation. Its function is as follows. Involved in the intramitochondrial synthesis of acylcarnitines from accumulated acyl-CoA metabolites. Reconverts acylcarnitines back into the respective acyl-CoA esters that can then undergo beta-oxidation, an essential step for the mitochondrial uptake of long-chain fatty acids and their subsequent beta-oxidation in the mitochondrion. Active with medium (C8-C12) and long-chain (C14-C18) acyl-CoA esters. This chain is Carnitine O-palmitoyltransferase 2, mitochondrial, found in Rattus norvegicus (Rat).